Reading from the N-terminus, the 355-residue chain is Peptide chain release factor 1 (355 aa).

At Gln233 the chain carries N5-methylglutamine. The tract at residues 280 to 310 is disordered; sequence ERRKKEQKRANNRRGQVGSGDRSERIRTYNF.

This sequence belongs to the prokaryotic/mitochondrial release factor family. Methylated by PrmC. Methylation increases the termination efficiency of RF1.

The protein resides in the cytoplasm. In terms of biological role, peptide chain release factor 1 directs the termination of translation in response to the peptide chain termination codons UAG and UAA. The sequence is that of Peptide chain release factor 1 from Rickettsia canadensis (strain McKiel).